The primary structure comprises 276 residues: Large ribosomal subunit protein uL2 (276 aa).

Disordered stretches follow at residues 1–50 and 206–276; these read MPIK…GRVT and GKAG…SKKR. A compositionally biased stretch (polar residues) spans 7 to 19; sequence RPTTPTRRFQTVV. Positions 20–38 are enriched in basic and acidic residues; that stretch reads SREDITKQTPEKSLVESKK.

The protein belongs to the universal ribosomal protein uL2 family. In terms of assembly, part of the 50S ribosomal subunit. Forms a bridge to the 30S subunit in the 70S ribosome.

In terms of biological role, one of the primary rRNA binding proteins. Required for association of the 30S and 50S subunits to form the 70S ribosome, for tRNA binding and peptide bond formation. It has been suggested to have peptidyltransferase activity; this is somewhat controversial. Makes several contacts with the 16S rRNA in the 70S ribosome. The chain is Large ribosomal subunit protein uL2 from Solibacter usitatus (strain Ellin6076).